Here is a 479-residue protein sequence, read N- to C-terminus: Glutamyl-tRNA(Gln) amidotransferase subunit A (479 aa).

Catalysis depends on charge relay system residues lysine 74 and serine 149. Serine 173 functions as the Acyl-ester intermediate in the catalytic mechanism.

This sequence belongs to the amidase family. GatA subfamily. Heterotrimer of A, B and C subunits.

It carries out the reaction L-glutamyl-tRNA(Gln) + L-glutamine + ATP + H2O = L-glutaminyl-tRNA(Gln) + L-glutamate + ADP + phosphate + H(+). Its function is as follows. Allows the formation of correctly charged Gln-tRNA(Gln) through the transamidation of misacylated Glu-tRNA(Gln) in organisms which lack glutaminyl-tRNA synthetase. The reaction takes place in the presence of glutamine and ATP through an activated gamma-phospho-Glu-tRNA(Gln). The chain is Glutamyl-tRNA(Gln) amidotransferase subunit A from Cenarchaeum symbiosum (strain A).